Here is a 233-residue protein sequence, read N- to C-terminus: uncharacterized protein (233 aa).

The protein belongs to the methyltransferase superfamily.

This is an uncharacterized protein from Bacillus subtilis (strain 168).